The primary structure comprises 194 residues: Large ribosomal subunit protein bL9 (194 aa).

Residues 156 to 167 are compositionally biased toward basic and acidic residues; the sequence is RGEDISSRREDQ. The interval 156-194 is disordered; the sequence is RGEDISSRREDQDAAAEAIAAAGEFFDPDAQQDEEPEQQ. The segment covering 181–194 has biased composition (acidic residues); sequence FDPDAQQDEEPEQQ.

This sequence belongs to the bacterial ribosomal protein bL9 family.

Its function is as follows. Binds to the 23S rRNA. The chain is Large ribosomal subunit protein bL9 from Rhodopseudomonas palustris (strain BisB5).